The primary structure comprises 240 residues: Manganese transport system ATP-binding protein MntB (240 aa).

The region spanning 1–233 is the ABC transporter domain; it reads MNIQGLTIAY…KIQFAYGDAP (233 aa). 33–40 contacts ATP; sequence GPNGAGKS.

The protein belongs to the ABC transporter superfamily.

Its subcellular location is the cell membrane. In terms of biological role, this protein is probably a component of a manganese permease, a binding protein-dependent, ATP-driven transport system. Probably responsible for energy coupling to the transport system. The protein is Manganese transport system ATP-binding protein MntB (mntB) of Listeria innocua serovar 6a (strain ATCC BAA-680 / CLIP 11262).